We begin with the raw amino-acid sequence, 388 residues long: Succinate--CoA ligase [ADP-forming] subunit beta (388 aa).

The ATP-grasp domain maps to 9–244; sequence KQLFAEYGLP…PSQEDEREAH (236 aa). ATP contacts are provided by residues Lys-46, 53-55, Glu-99, Thr-102, and Glu-107; that span reads GRG. Residues Asn-199 and Asp-213 each contribute to the Mg(2+) site. Substrate-binding positions include Asn-264 and 321-323; that span reads GIV.

The protein belongs to the succinate/malate CoA ligase beta subunit family. As to quaternary structure, heterotetramer of two alpha and two beta subunits. Mg(2+) serves as cofactor.

It carries out the reaction succinate + ATP + CoA = succinyl-CoA + ADP + phosphate. It catalyses the reaction GTP + succinate + CoA = succinyl-CoA + GDP + phosphate. It participates in carbohydrate metabolism; tricarboxylic acid cycle; succinate from succinyl-CoA (ligase route): step 1/1. Functionally, succinyl-CoA synthetase functions in the citric acid cycle (TCA), coupling the hydrolysis of succinyl-CoA to the synthesis of either ATP or GTP and thus represents the only step of substrate-level phosphorylation in the TCA. The beta subunit provides nucleotide specificity of the enzyme and binds the substrate succinate, while the binding sites for coenzyme A and phosphate are found in the alpha subunit. This is Succinate--CoA ligase [ADP-forming] subunit beta from Marinomonas sp. (strain MWYL1).